We begin with the raw amino-acid sequence, 133 residues long: Small ribosomal subunit protein uS11 (133 aa).

The disordered stretch occupies residues 1 to 22 (MPPKTRGAVRKPRKKDKKNIAL). Basic residues predominate over residues 7-17 (GAVRKPRKKDK).

This sequence belongs to the universal ribosomal protein uS11 family. In terms of assembly, part of the 30S ribosomal subunit. Interacts with proteins S7 and S18. Binds to IF-3.

In terms of biological role, located on the platform of the 30S subunit, it bridges several disparate RNA helices of the 16S rRNA. Forms part of the Shine-Dalgarno cleft in the 70S ribosome. In Renibacterium salmoninarum (strain ATCC 33209 / DSM 20767 / JCM 11484 / NBRC 15589 / NCIMB 2235), this protein is Small ribosomal subunit protein uS11.